A 207-amino-acid chain; its full sequence is Large ribosomal subunit protein uL4 (207 aa).

Positions 49 to 78 (HAVKNRSAVRGGGRKPWRQKGTGRARQGSI) are disordered. Residues 60–71 (GGRKPWRQKGTG) are compositionally biased toward basic residues.

The protein belongs to the universal ribosomal protein uL4 family. In terms of assembly, part of the 50S ribosomal subunit.

One of the primary rRNA binding proteins, this protein initially binds near the 5'-end of the 23S rRNA. It is important during the early stages of 50S assembly. It makes multiple contacts with different domains of the 23S rRNA in the assembled 50S subunit and ribosome. Its function is as follows. Forms part of the polypeptide exit tunnel. The protein is Large ribosomal subunit protein uL4 of Enterococcus faecalis (strain ATCC 700802 / V583).